The chain runs to 246 residues: DNA repair protein RecO (246 aa).

The protein belongs to the RecO family.

Involved in DNA repair and RecF pathway recombination. The polypeptide is DNA repair protein RecO (Cutibacterium acnes (strain DSM 16379 / KPA171202) (Propionibacterium acnes)).